A 219-amino-acid polypeptide reads, in one-letter code: Protein DMP5 (219 aa).

The tract at residues 1 to 24 (MSALRLRNANTPAPELDELSDQTP) is disordered. 4 helical membrane passes run 51–71 (LSNL…PVFT), 82–102 (FLTA…SFTD), 142–162 (MRFV…AVAL), and 182–202 (VLDI…MVFP).

The protein belongs to the plant DMP1 protein family.

Its subcellular location is the endoplasmic reticulum membrane. Involved in membrane remodeling. The sequence is that of Protein DMP5 from Arabidopsis thaliana (Mouse-ear cress).